A 400-amino-acid polypeptide reads, in one-letter code: ATP-dependent RNA helicase fal-1 (400 aa).

Positions 26–54 match the Q motif motif; sequence PTFESMSLKESLLRGIYAYGYESPSAVQS. The region spanning 57-227 is the Helicase ATP-binding domain; sequence IVQICKGRDT…TKFMTDPVRI (171 aa). Residue 70-77 participates in ATP binding; sequence AQSGTGKT. The short motif at 175–178 is the DEAD box element; sequence DEAD. The region spanning 238 to 399 is the Helicase C-terminal domain; it reads GLKQYFIAVE…EMPMNVADLI (162 aa).

Belongs to the DEAD box helicase family. DDX48/FAL1 subfamily.

Its subcellular location is the nucleus. It is found in the nucleolus. It carries out the reaction ATP + H2O = ADP + phosphate + H(+). Functionally, ATP-dependent RNA helicase involved in 40S ribosomal subunit biogenesis. Required for the processing and cleavage of 35S pre-rRNA at sites A0, A1, and A2, leading to mature 18S rRNA. This Neurospora crassa (strain ATCC 24698 / 74-OR23-1A / CBS 708.71 / DSM 1257 / FGSC 987) protein is ATP-dependent RNA helicase fal-1 (fal-1).